Here is a 271-residue protein sequence, read N- to C-terminus: MKLVFYGAGNMAHAIFTGIVNSKVIDSNDIYLTNRSNEVALKEYAEKLGVNYSYDDEALLKAADYVFLGTKPYDFESLAERIKPFITDKNKFISIMAGLPISYIREKLEADNPIARIMPNTNAHVGHSVTGISFSSNFGPNSKDEVDELINAFGSAIEVPEDNLHQVTAITGSGPAFLYHVFEQYVTAGTRLGLEKAQVEESIRNLIIGTSKMIERSELSMEQLRKNITSKGGTTQAGLNALSQHDLESVFEDCLRAAVDRSVELSSQDED.

The protein belongs to the pyrroline-5-carboxylate reductase family.

It localises to the cytoplasm. It catalyses the reaction L-proline + NADP(+) = (S)-1-pyrroline-5-carboxylate + NADPH + 2 H(+). The enzyme catalyses L-proline + NAD(+) = (S)-1-pyrroline-5-carboxylate + NADH + 2 H(+). The protein operates within amino-acid biosynthesis; L-proline biosynthesis; L-proline from L-glutamate 5-semialdehyde: step 1/1. Functionally, catalyzes the reduction of 1-pyrroline-5-carboxylate (PCA) to L-proline. This Staphylococcus saprophyticus subsp. saprophyticus (strain ATCC 15305 / DSM 20229 / NCIMB 8711 / NCTC 7292 / S-41) protein is Pyrroline-5-carboxylate reductase.